A 284-amino-acid chain; its full sequence is Ribosomal RNA small subunit methyltransferase A (284 aa).

The S-adenosyl-L-methionine site is built by Asn12, Leu14, Gly38, Glu59, Asp81, and Asn106.

The protein belongs to the class I-like SAM-binding methyltransferase superfamily. rRNA adenine N(6)-methyltransferase family. RsmA subfamily.

The protein localises to the cytoplasm. It catalyses the reaction adenosine(1518)/adenosine(1519) in 16S rRNA + 4 S-adenosyl-L-methionine = N(6)-dimethyladenosine(1518)/N(6)-dimethyladenosine(1519) in 16S rRNA + 4 S-adenosyl-L-homocysteine + 4 H(+). Its function is as follows. Specifically dimethylates two adjacent adenosines (A1518 and A1519) in the loop of a conserved hairpin near the 3'-end of 16S rRNA in the 30S particle. May play a critical role in biogenesis of 30S subunits. This chain is Ribosomal RNA small subunit methyltransferase A, found in Phytoplasma australiense.